Consider the following 867-residue polypeptide: MMFSKRKSIRFNPEGDYTELPRGGYVVPSKLGGIQFGVPPETIKDSMALKIDVPTIYVFPEELWDRKTGINAAEAEFPAYFNYFILKRKVSFVCTKEQEQRIRIVFQETLLGPPEFNTGIIINSSSSTTDTSKTSPIKKQTSSSSPPLSPQQQQPPPPLVKQPSQQQLEELATMDTCHYHHHHHHQEVNDNDNNNNTTTNNNNIEILEQQQQQQQQQQQQQDEDSTDVDEEFQKEFSSTFPRSEIPNLEKECKYLRTFNSVDELFDFILFDDNGIAKLSDDVEIHFQEDQSLFKVLQFEETGKGNKVQTLVATIPSKILFPDMINSISTINDNKIFDPPTFGITIIGSSHGFDPKKSTTGFVLWINKRGIMVDPPLNSSSFLQSQGVPTRMVDHIILTHCHADHDSGTFQKLLEEYQITVVTTPTILGSFLRKYGALSNLSTDLLRRLFIFRPVMIGEPMIISGAEFRFFYTIHTIPTISFEVFYGGKSIFYSGDTCYDPNRIKDMNKRGIMKTSRMKFFLRPWNHTVVLHEAGVPPIHTPVSVLRALPDEVKNRLYLVHISEHTLPAGSGLKIAKEGVAHTLSLDVMKSSHSEAVDILKLVESVDIFRSIPLTQACEILQTATKRKYSQGSVIIARDTEPDAFYVVASGVVCVNIGELKKNLIVGDYFGEMSLVMGGLRSANVQAVTDVEVLSFNKEDFLSITRNSTESIQFITRLWEMRNEKSWETMSLNSVFSRCTNSQKTAIQSILVRELIKKDETLWCKGEEALFGCLVAEGSFVFKEDDSLESFSQGSFLGDINAMTTQPPSIHKTTVVAKEESVIYKVLSQDLIKFFSNNPGIQLAFLDTIFVDALRDQVQQLVNSKLTY.

Residues 121–146 (IINSSSSTTDTSKTSPIKKQTSSSSP) show a composition bias toward low complexity. Disordered stretches follow at residues 121 to 167 (IINS…SQQQ) and 180 to 241 (HHHH…STFP). The span at 147 to 160 (PLSPQQQQPPPPLV) shows a compositional bias: pro residues. The span at 191-220 (NDNNNNTTTNNNNIEILEQQQQQQQQQQQQ) shows a compositional bias: low complexity. Positions 221-232 (QDEDSTDVDEEF) are enriched in acidic residues. Residues 357 to 503 (STTGFVLWIN…GDTCYDPNRI (147 aa)) form a phosphodiesterase activity region. Positions 399, 401, and 403 each coordinate a divalent metal cation. A nucleoside 3',5'-cyclic phosphate-binding positions include 607 to 721 (IFRS…WEMR) and 734 to 851 (VFSR…IFVD).

The protein belongs to the metallo-beta-lactamase superfamily. cNMP phosphodiesterase family. Mn(2+) is required as a cofactor. It depends on Mg(2+) as a cofactor. The cofactor is Zn(2+).

It localises to the cytoplasm. The protein localises to the cytosol. The enzyme catalyses 3',5'-cyclic GMP + H2O = GMP + H(+). In terms of biological role, phosphodiesterase specific for cGMP, which is activated by cGMP but not by cAMP. Involved in the degradation of intracellular cGMP, contributes to the control of cGMP signals. This Dictyostelium discoideum (Social amoeba) protein is cGMP-dependent 3',5'-cGMP phosphodiesterase A (pdeD).